A 320-amino-acid polypeptide reads, in one-letter code: Melanocyte-stimulating hormone receptor (320 aa).

The Extracellular segment spans residues 1–40 (MPVLGPERRLLASLSSAPPAAPRLGLAANQTNQTGPQCLE). Asparagine 32 is a glycosylation site (N-linked (GlcNAc...) asparagine). The helical transmembrane segment at 41 to 66 (VSIPDGLFLSLGLVSLVENVLVVAAI) threads the bilayer. The Cytoplasmic portion of the chain corresponds to 67-75 (AKNRNLHSP). Residues 76 to 96 (MYYFVCCLAVSDLLVSVSNVL) traverse the membrane as a helical segment. Residues 97 to 121 (ETAVLLLLEAGALAAQAAVVQQLDN) lie on the Extracellular side of the membrane. Residues 122–143 (VMDVLICGSMVSSLCFLGAIAV) form a helical membrane-spanning segment. Topologically, residues 144–166 (DRYVSIFYALRYHSIVTLPRAGR) are cytoplasmic. A helical transmembrane segment spans residues 167–186 (AIAAIWAGSVLSSTLFIAYY). Topologically, residues 187-194 (HHTAVLLG) are extracellular. A helical transmembrane segment spans residues 195-214 (LVSFFVAMLALMAVLYVHML). Topologically, residues 215–243 (ARACQHGRHIARLHKTQHPTRQGCGLKGA) are cytoplasmic. The chain crosses the membrane as a helical span at residues 244–269 (ATLTILLGVFLLCWAPFFLHLSLVVL). Topologically, residues 270–282 (CPQHPTCGCVFKN) are extracellular. Residues 283 to 303 (VNLFLALVICNSIVDPLIYAF) traverse the membrane as a helical segment. The Cytoplasmic segment spans residues 304-320 (RSQELRKTLQEVLQCSW).

This sequence belongs to the G-protein coupled receptor 1 family. Interacts with MGRN1, but does not undergo MGRN1-mediated ubiquitination; this interaction competes with GNAS-binding and thus inhibits agonist-induced cAMP production. Interacts with OPN3; the interaction results in a decrease in MC1R-mediated cAMP signaling and ultimately a decrease in melanin production in melanocytes.

It localises to the cell membrane. In terms of biological role, receptor for MSH (alpha, beta and gamma) and ACTH. The activity of this receptor is mediated by G proteins which activate adenylate cyclase. Mediates melanogenesis, the production of eumelanin (black/brown) and phaeomelanin (red/yellow), via regulation of cAMP signaling in melanocytes. This Sus scrofa (Pig) protein is Melanocyte-stimulating hormone receptor (MC1R).